The primary structure comprises 88 residues: Protein ORGAN SIZE RELATED 1 (88 aa).

An organ Size Related (OSR) domain region spans residues 25–76 (ITARSVALLLFLSLLLLILPPFLPPLPPPPATLLLLPLLLMILLIFLAFSPS). Helical transmembrane passes span 30–50 (VALL…LPPL) and 53–73 (PPAT…FLAF).

This sequence belongs to the plant organ size related (OSR) protein family. In terms of tissue distribution, mostly expressed in flowers, and, to a lower extent, in leaves and cotyledons.

The protein localises to the membrane. Its subcellular location is the endoplasmic reticulum. The protein resides in the nucleus. It localises to the cytoplasm. Together with ARGOS and ARL, regulates organ growth and final organ size. Promotes both cell expansion and proliferation-dependent organ growth, in an ANT-dependent manner. This Arabidopsis thaliana (Mouse-ear cress) protein is Protein ORGAN SIZE RELATED 1.